A 470-amino-acid polypeptide reads, in one-letter code: Serine--tRNA ligase (470 aa).

272–274 (TAE) contributes to the L-serine binding site. 303 to 305 (RAE) contributes to the ATP binding site. Position 326 (Glu326) interacts with L-serine. Position 393 to 396 (393 to 396 (EISS)) interacts with ATP. An L-serine-binding site is contributed by Ser428.

It belongs to the class-II aminoacyl-tRNA synthetase family. Type-1 seryl-tRNA synthetase subfamily. As to quaternary structure, homodimer. The tRNA molecule binds across the dimer.

The protein localises to the cytoplasm. It catalyses the reaction tRNA(Ser) + L-serine + ATP = L-seryl-tRNA(Ser) + AMP + diphosphate + H(+). The catalysed reaction is tRNA(Sec) + L-serine + ATP = L-seryl-tRNA(Sec) + AMP + diphosphate + H(+). It functions in the pathway aminoacyl-tRNA biosynthesis; selenocysteinyl-tRNA(Sec) biosynthesis; L-seryl-tRNA(Sec) from L-serine and tRNA(Sec): step 1/1. Functionally, catalyzes the attachment of serine to tRNA(Ser). Is also able to aminoacylate tRNA(Sec) with serine, to form the misacylated tRNA L-seryl-tRNA(Sec), which will be further converted into selenocysteinyl-tRNA(Sec). In Nitrobacter hamburgensis (strain DSM 10229 / NCIMB 13809 / X14), this protein is Serine--tRNA ligase.